The primary structure comprises 316 residues: Ribosomal RNA small subunit methyltransferase H (316 aa).

S-adenosyl-L-methionine contacts are provided by residues 35 to 37 (AGH), aspartate 55, phenylalanine 84, aspartate 105, and glutamine 112.

Belongs to the methyltransferase superfamily. RsmH family.

It is found in the cytoplasm. The catalysed reaction is cytidine(1402) in 16S rRNA + S-adenosyl-L-methionine = N(4)-methylcytidine(1402) in 16S rRNA + S-adenosyl-L-homocysteine + H(+). Functionally, specifically methylates the N4 position of cytidine in position 1402 (C1402) of 16S rRNA. This is Ribosomal RNA small subunit methyltransferase H from Streptococcus pneumoniae (strain Hungary19A-6).